We begin with the raw amino-acid sequence, 139 residues long: Holo-[acyl-carrier-protein] synthase (139 aa).

Mg(2+)-binding residues include Asp8 and Glu57.

This sequence belongs to the P-Pant transferase superfamily. AcpS family. Mg(2+) serves as cofactor.

It is found in the cytoplasm. It catalyses the reaction apo-[ACP] + CoA = holo-[ACP] + adenosine 3',5'-bisphosphate + H(+). Transfers the 4'-phosphopantetheine moiety from coenzyme A to a Ser of acyl-carrier-protein. In Sinorhizobium medicae (strain WSM419) (Ensifer medicae), this protein is Holo-[acyl-carrier-protein] synthase.